The sequence spans 164 residues: Probable metalloprotease y4qB (164 aa).

The MPN domain maps to 5–142; it reads IWIPESVVEA…WLPHAWIGQL (138 aa). Positions 89, 91, and 103 each coordinate Zn(2+).

Belongs to the peptidase M67B family.

In Sinorhizobium fredii (strain NBRC 101917 / NGR234), this protein is Probable metalloprotease y4qB.